We begin with the raw amino-acid sequence, 558 residues long: Large cysteine-rich periplasmic protein OmcB (558 aa).

An N-terminal signal peptide occupies residues 1 to 24; the sequence is MSKLIRRVVTVLALTSMASSFASG. A propeptide spanning residues 25 to 40 is cleaved from the precursor; the sequence is KTEVAAAESLVTRFIA.

In terms of assembly, part of a disulfide cross-linked outer membrane complex (COMC) composed of the major outer membrane porin (MOMP), the small cysteine-rich protein (OmcA) and the large cysteine-rich periplasmic protein (OmcB).

The protein resides in the periplasm. In elementary bodies (EBs, the infectious stage, which is able to survive outside the host cell) provides the structural integrity of the outer envelope through disulfide cross-links with the small cysteine-rich protein and the major outer membrane porin. It has been described in publications as the Sarkosyl-insoluble COMC (Chlamydia outer membrane complex), and serves as the functional equivalent of peptidoglycan. It is present but the disulfide bonds are reduced in reticulate bodies (RBs). This chain is Large cysteine-rich periplasmic protein OmcB (omcB), found in Chlamydia felis (strain Fe/C-56) (Chlamydophila felis).